The sequence spans 805 residues: Kinesin-like protein Klp10A (805 aa).

The interval 1 to 274 is globular; it reads MDMITVGQSV…FVPLLDGQAV (274 aa). 2 disordered regions span residues 68–94 and 117–211; these read QHAA…SAIG and IPNP…RRSH. Positions 80-94 are enriched in polar residues; it reads APMNLSRNPTQSAIG. A compositionally biased stretch (low complexity) spans 123–136; that stretch reads SSNSVNTNSNSNTT. S157 carries the post-translational modification Phosphoserine. The span at 158–179 shows a compositional bias: polar residues; that stretch reads QAATGQQQTRIASAVPNNTLPN. Positions 180 to 200 are enriched in low complexity; sequence PSAAASAGPAAQGVATAATTQ. The stretch at 205–244 forms a coiled coil; that stretch reads ASTRRSHALKEVERLKENREKRRARQAEMKEEKVALMNQD. In terms of domain architecture, Kinesin motor spans 278-610; that stretch reads QITVCVRKRP…LRYADRVKEL (333 aa). 368-375 serves as a coordination point for ATP; it reads GQTGSGKT. T630 is subject to Phosphothreonine. The tract at residues 633-688 is disordered; sequence EEEEELNMVHPHSHQLHPNSHAPASQSNNQRAPASHHSGAVIHNNNNNNNKNGNAG. Residues 648 to 664 show a composition bias toward polar residues; it reads LHPNSHAPASQSNNQRA. Residues 676-688 show a composition bias toward low complexity; it reads NNNNNNNKNGNAG. Residues S795, S797, and S800 each carry the phosphoserine modification.

This sequence belongs to the TRAFAC class myosin-kinesin ATPase superfamily. Kinesin family. MCAK/KIF2 subfamily. In terms of assembly, interacts with Alms1a (via C-terminus). Expressed in male germline stem cells and spermatogonia (at protein level).

It is found in the cytoplasm. Its subcellular location is the cytoskeleton. It localises to the microtubule organizing center. The protein localises to the centrosome. The protein resides in the spindle pole. It is found in the chromosome. Its subcellular location is the centromere. Required during anaphase to drive sister chromatid separation to promote flux by actively depolymerizing kinetochore microtubules at their pole-associated minus ends, thereby moving chromatids through a 'poleward flux'. Involved in asymmetric cell division of sensory organ precursor (SOP) cells by playing a role in the asymmetric localization of Sara-expressing endosomes to the pIIa daughter cell but not to the pIIb cell. Klp98A targets Sara-expressing endosomes to the central spindle which is symmetrically arranged in early cell division. During late cytokinesis, central spindle asymmetry is generated by enrichment of Patronin on the pIIb side which protects microtubules from depolymerization by Klp10A while unprotected microtubules on the pIIa side are disassembled by Klp10A, leading to the asymmetric delivery of Sara-expressing endosomes to the pIIa daughter cell. The chain is Kinesin-like protein Klp10A from Drosophila melanogaster (Fruit fly).